The primary structure comprises 140 residues: Nucleoside diphosphate kinase (140 aa).

Positions 11, 59, 87, 93, 104, and 114 each coordinate ATP. Residue H117 is the Pros-phosphohistidine intermediate of the active site.

This sequence belongs to the NDK family. Homotetramer. The cofactor is Mg(2+).

It localises to the cytoplasm. It carries out the reaction a 2'-deoxyribonucleoside 5'-diphosphate + ATP = a 2'-deoxyribonucleoside 5'-triphosphate + ADP. It catalyses the reaction a ribonucleoside 5'-diphosphate + ATP = a ribonucleoside 5'-triphosphate + ADP. Functionally, major role in the synthesis of nucleoside triphosphates other than ATP. The ATP gamma phosphate is transferred to the NDP beta phosphate via a ping-pong mechanism, using a phosphorylated active-site intermediate. This is Nucleoside diphosphate kinase from Persephonella marina (strain DSM 14350 / EX-H1).